Consider the following 196-residue polypeptide: RNA-free ribonuclease P (196 aa).

It belongs to the HARP family.

The catalysed reaction is Endonucleolytic cleavage of RNA, removing 5'-extranucleotides from tRNA precursor.. Functionally, RNA-free RNase P that catalyzes the removal of the 5'-leader sequence from pre-tRNA to produce the mature 5'-terminus. This chain is RNA-free ribonuclease P, found in Thermodesulfovibrio yellowstonii (strain ATCC 51303 / DSM 11347 / YP87).